A 145-amino-acid polypeptide reads, in one-letter code: Ribosomal RNA large subunit methyltransferase H (145 aa).

Residues Leu-62, Gly-94, and 113 to 118 each bind S-adenosyl-L-methionine; that span reads LGQLTL.

The protein belongs to the RNA methyltransferase RlmH family. As to quaternary structure, homodimer.

The protein localises to the cytoplasm. It catalyses the reaction pseudouridine(1915) in 23S rRNA + S-adenosyl-L-methionine = N(3)-methylpseudouridine(1915) in 23S rRNA + S-adenosyl-L-homocysteine + H(+). Functionally, specifically methylates the pseudouridine at position 1915 (m3Psi1915) in 23S rRNA. The sequence is that of Ribosomal RNA large subunit methyltransferase H from Deinococcus deserti (strain DSM 17065 / CIP 109153 / LMG 22923 / VCD115).